A 397-amino-acid chain; its full sequence is Enoyl-[acyl-carrier-protein] reductase [NADH] (397 aa).

Residues 48–53, 74–75, 111–112, and 139–140 each bind NAD(+); these read GASTGY, FE, DA, and LA. Tyr225 serves as a coordination point for substrate. Catalysis depends on Tyr235, which acts as the Proton donor. NAD(+) is bound by residues Lys244 and 273-275; that span reads VVT.

This sequence belongs to the TER reductase family. In terms of assembly, monomer.

It carries out the reaction a 2,3-saturated acyl-[ACP] + NAD(+) = a (2E)-enoyl-[ACP] + NADH + H(+). Its pathway is lipid metabolism; fatty acid biosynthesis. Its function is as follows. Involved in the final reduction of the elongation cycle of fatty acid synthesis (FAS II). Catalyzes the reduction of a carbon-carbon double bond in an enoyl moiety that is covalently linked to an acyl carrier protein (ACP). The polypeptide is Enoyl-[acyl-carrier-protein] reductase [NADH] (Edwardsiella ictaluri (strain 93-146)).